The chain runs to 570 residues: Proline--tRNA ligase (570 aa).

Belongs to the class-II aminoacyl-tRNA synthetase family. ProS type 1 subfamily. As to quaternary structure, homodimer.

It is found in the cytoplasm. The enzyme catalyses tRNA(Pro) + L-proline + ATP = L-prolyl-tRNA(Pro) + AMP + diphosphate. Its function is as follows. Catalyzes the attachment of proline to tRNA(Pro) in a two-step reaction: proline is first activated by ATP to form Pro-AMP and then transferred to the acceptor end of tRNA(Pro). As ProRS can inadvertently accommodate and process non-cognate amino acids such as alanine and cysteine, to avoid such errors it has two additional distinct editing activities against alanine. One activity is designated as 'pretransfer' editing and involves the tRNA(Pro)-independent hydrolysis of activated Ala-AMP. The other activity is designated 'posttransfer' editing and involves deacylation of mischarged Ala-tRNA(Pro). The misacylated Cys-tRNA(Pro) is not edited by ProRS. The protein is Proline--tRNA ligase of Neisseria gonorrhoeae (strain ATCC 700825 / FA 1090).